Reading from the N-terminus, the 238-residue chain is Lactate utilization protein A (238 aa).

This sequence belongs to the LutA/YkgE family.

Functionally, is involved in L-lactate degradation and allows cells to grow with lactate as the sole carbon source. In Bacillus pumilus (strain SAFR-032), this protein is Lactate utilization protein A.